Consider the following 193-residue polypeptide: Imidazoleglycerol-phosphate dehydratase (193 aa).

This sequence belongs to the imidazoleglycerol-phosphate dehydratase family.

It localises to the cytoplasm. It carries out the reaction D-erythro-1-(imidazol-4-yl)glycerol 3-phosphate = 3-(imidazol-4-yl)-2-oxopropyl phosphate + H2O. The protein operates within amino-acid biosynthesis; L-histidine biosynthesis; L-histidine from 5-phospho-alpha-D-ribose 1-diphosphate: step 6/9. The polypeptide is Imidazoleglycerol-phosphate dehydratase (Sulfolobus acidocaldarius (strain ATCC 33909 / DSM 639 / JCM 8929 / NBRC 15157 / NCIMB 11770)).